The following is a 587-amino-acid chain: Proteasome-associated ATPase (587 aa).

Positions 9 to 94 (ARKAQHDAEI…KEEVDRLAQP (86 aa)) form a coiled coil. Position 276–281 (276–281 (GCGKTL)) interacts with ATP. The tract at residues 586–587 (YL) is docks into pockets in the proteasome alpha-ring.

It belongs to the AAA ATPase family. In terms of assembly, homohexamer. Assembles into a hexameric ring structure that caps the 20S proteasome core. Strongly interacts with the prokaryotic ubiquitin-like protein Pup through a hydrophobic interface; the interacting region of ARC lies in its N-terminal coiled-coil domain. There is one Pup binding site per ARC hexamer ring. Upon ATP-binding, the C-terminus of ARC interacts with the alpha-rings of the proteasome core, possibly by binding to the intersubunit pockets.

It functions in the pathway protein degradation; proteasomal Pup-dependent pathway. In terms of biological role, ATPase which is responsible for recognizing, binding, unfolding and translocation of pupylated proteins into the bacterial 20S proteasome core particle. May be essential for opening the gate of the 20S proteasome via an interaction with its C-terminus, thereby allowing substrate entry and access to the site of proteolysis. Thus, the C-termini of the proteasomal ATPase may function like a 'key in a lock' to induce gate opening and therefore regulate proteolysis. The protein is Proteasome-associated ATPase of Thermomonospora curvata (strain ATCC 19995 / DSM 43183 / JCM 3096 / KCTC 9072 / NBRC 15933 / NCIMB 10081 / Henssen B9).